Reading from the N-terminus, the 339-residue chain is N-acetyl-gamma-glutamyl-phosphate reductase (339 aa).

C144 is an active-site residue.

It belongs to the NAGSA dehydrogenase family. Type 1 subfamily.

It localises to the cytoplasm. The catalysed reaction is N-acetyl-L-glutamate 5-semialdehyde + phosphate + NADP(+) = N-acetyl-L-glutamyl 5-phosphate + NADPH + H(+). It participates in amino-acid biosynthesis; L-arginine biosynthesis; N(2)-acetyl-L-ornithine from L-glutamate: step 3/4. In terms of biological role, catalyzes the NADPH-dependent reduction of N-acetyl-5-glutamyl phosphate to yield N-acetyl-L-glutamate 5-semialdehyde. In Methanobrevibacter smithii (strain ATCC 35061 / DSM 861 / OCM 144 / PS), this protein is N-acetyl-gamma-glutamyl-phosphate reductase.